Reading from the N-terminus, the 168-residue chain is Vasopressin-neurophysin 2-copeptin (168 aa).

A signal peptide spans 1–23; the sequence is MLAMMLNTTLSACFLSLLALTSA. The cysteines at positions 24 and 29 are disulfide-linked. A Glycine amide modification is found at Gly32. Cystine bridges form between Cys45–Cys89, Cys48–Cys62, Cys56–Cys79, Cys63–Cys69, Cys96–Cys108, Cys102–Cys120, and Cys109–Cys114. Residue Asn135 is glycosylated (N-linked (GlcNAc...) asparagine).

This sequence belongs to the vasopressin/oxytocin family. As to quaternary structure, interacts with vasopressin receptors V1bR/AVPR1B (Ki=85 pM), V1aR/AVPR1A (Ki=0.6 nM) and V2R/AVPR2 (Ki=4.9 nM). Interacts with oxytocin receptor (OXTR) (Ki=110 nM).

It localises to the secreted. Functionally, neurophysin 2 specifically binds vasopressin. Vasopressin has a direct antidiuretic action on the kidney, it also causes vasoconstriction of the peripheral vessels. Acts by binding to vasopressin receptors (V1bR/AVPR1B, V1aR/AVPR1A, and V2R/AVPR2). In Rattus norvegicus (Rat), this protein is Vasopressin-neurophysin 2-copeptin (Avp).